Reading from the N-terminus, the 320-residue chain is L-lactate dehydrogenase (320 aa).

NAD(+)-binding positions include Val19, Asp40, Arg45, and 85-86; that span reads GA. 2 residues coordinate substrate: Gln88 and Arg94. Residues Ser107, 124–126, and Ser149 each bind NAD(+); that span reads ITN. 126–129 is a binding site for substrate; it reads NPVD. A substrate-binding site is contributed by 154 to 157; sequence DSAR. Positions 159 and 174 each coordinate beta-D-fructose 1,6-bisphosphate. Catalysis depends on His181, which acts as the Proton acceptor. Tyr228 bears the Phosphotyrosine mark. Thr237 contacts substrate.

Belongs to the LDH/MDH superfamily. LDH family. In terms of assembly, homotetramer.

It is found in the cytoplasm. It carries out the reaction (S)-lactate + NAD(+) = pyruvate + NADH + H(+). It participates in fermentation; pyruvate fermentation to lactate; (S)-lactate from pyruvate: step 1/1. Its activity is regulated as follows. Allosterically activated by fructose 1,6-bisphosphate (FBP). Catalyzes the conversion of lactate to pyruvate. This is L-lactate dehydrogenase from Bifidobacterium animalis subsp. lactis (strain AD011).